Consider the following 424-residue polypeptide: Inhibin beta A chain (424 aa).

The signal sequence occupies residues 1–20 (MPLLWLRGFLLASCWIIVRS). Residues 21–308 (SPTPGSEGPG…EDHPHRRRRR (288 aa)) constitute a propeptide that is removed on maturation. N165 is a glycosylation site (N-linked (GlcNAc...) asparagine). Residues 257 to 288 (KKKKKEEEGEGKKKDGGDGGAGADEDKEQSHR) are disordered. Positions 261-273 (KEEEGEGKKKDGG) are enriched in basic and acidic residues. 4 disulfides stabilise this stretch: C312-C320, C319-C389, C348-C421, and C352-C423.

It belongs to the TGF-beta family. As to quaternary structure, dimeric, linked by one or more disulfide bonds. Inhibin A is a dimer of alpha/INHA and beta-A/INHBA. Activin A is a homodimer of beta-A/INHBA. Activin AB is a dimer of beta-A/INHBA and beta-B/INHBB. Interacts with FST and FSTL3; these interactions prevent activin A interaction to its type II receptor. Activin A interacts with ACVR2A. Activin A interacts with BMPR2. Inhibin A interacts with ACVR1; this interaction creates a non-signaling complex (NSC) that inhibits ACVR1-mediated BMP signaling. Inhibin A interacts with ACVR2A.

It is found in the secreted. Its function is as follows. Inhibins/activins are involved in regulating a number of diverse functions such as hypothalamic and pituitary hormone secretion, gonadal hormone secretion, germ cell development and maturation, erythroid differentiation, insulin secretion, nerve cell survival, embryonic axial development or bone growth, depending on their subunit composition. Activin A is a homodimer of INHBA that plays a role in several essential biological processes including embryonic development, stem cell maintenance and differentiation, haematopoiesis, cell proliferation and tissue fibrosis. Signals through type I (such as ACVR1B or ACVR1C) and type II receptors (such as ACVR2A, ACVR2B or BMPR2) which, upon ligand binding, phosphorylate SMAD2 and SMAD3 intracellular signaling mediators that form a complex with SMAD4, translocate to the nucleus and modulate gene expression. Can also activate alternative non-canonical intracellular signaling pathways including the p38 MAPK, extracellular signal-regulated kinases 1/2 (ERK1/2) and c-Jun N-terminal kinases (JNKs) to modulate cell migration and differentiation. Alternatively, promotes osteoblastic differentiation via ACVRL1-SMAD1/5/9 pathway. In addition, can engage the type I receptor ACVR1 to form an ACVR1-activin A-type II receptor non-signaling complex (NSC) that renders receptors unavailable for engagement with BMPs, hence resulting in an apparent inhibition of ACVR1-mediated BMP signaling. In terms of biological role, inhibin A is a dimer of alpha/INHA and beta-A/INHBA that functions as a feedback regulator in the hypothalamic-pituitary-gonadal (HPG) axis. Inhibits the secretion of FSH from the anterior pituitary gland by acting on pituitary gonadotrope cells. Antagonizes activin A by binding to the proteoglycan, betaglycan, and forming a stable complex with and, thereby, sequestering type II activin receptors while excluding type I receptor. The sequence is that of Inhibin beta A chain (INHBA) from Felis catus (Cat).